The primary structure comprises 468 residues: O-methyltransferase lcsG (468 aa).

The span at 1–12 shows a compositional bias: polar residues; it reads MGDNVQSDTTAA. Positions 1 to 29 are disordered; the sequence is MGDNVQSDTTAAQAGITDAPTAPTSAPVS. Residues 298–299, Asp321, 348–349, and Lys363 each bind S-adenosyl-L-methionine; these read GG and DF.

The protein belongs to the class I-like SAM-binding methyltransferase superfamily. Cation-independent O-methyltransferase family.

The protein operates within secondary metabolite biosynthesis. Its function is as follows. O-methyltransferase; part of the gene cluster that mediates the biosynthesis of the lipopeptide antibiotics leucinostatins that show extensive biological activities, including antimalarial, antiviral, antibacterial, antifungal, and antitumor activities, as well as phytotoxic. Leucinostatin A contains nine amino acid residues, including the unusual amino acid 4-methyl-L-proline (MePro), 2-amino-6-hydroxy-4-methyl-8-oxodecanoic acid (AHyMeOA), 3-hydroxyleucine (HyLeu), alpha-aminoisobutyric acid (AIB), beta-Ala, a 4-methylhex-2-enoic acid at the N-terminus as well as a N1,N1-dimethylpropane-1,2-diamine (DPD) at the C-terminus. The biosynthesis of leucinostatins is probably initiated with the assembly of 4-methylhex-2-enoic acid by a reducing PKS. Two reducing polyketide synthases, lcsB and lcsC, have been identified in the cluster and it is not clear which is the one that assembles 4-methylhex-2-enoic acid since both contain KS, AT, DH, cMT, ER, KR and ACP domains. The polyketide residue might be transferred to the NRPS lcsA, mediated by two additional enzymes, the acyl-CoA ligase lcsD and the thioesterase lcsE. The linear polyketide carboxylic acid, which is released from PKS, is converted to a CoA thioester by lcsD, and then lcsE hydrolyzes the thiol bond and shuttles the polyketide intermediate to lcsA. The C domain of the first module catalyzed the condensation of 4-methylhex-2-enoic acid and MePro carried by domain A1, followed by successive condensations of nine amino acids to trigger the elongation of the linear peptide. A5 and A6 domains of lcsA are proposed to incorporate leucine, A2 AHyMeOA, and A3 incorporates HyLeu. A4, A7 and A8 incorporate AIB. The AHyMeOA in leucinostatin A activated by the A2 might be produced by the second PKS (lcsB or lcsC) present within the cluster. The MePro is probably produced via leucine cyclization and may originate from a separate pathway, independent of the cluster. Another nonproteinogenic amino acid, beta-Ala, could be produced by an aspartic acid decarboxylase also localized outside of the cluster. Two candidates are VFPBJ_01400 and VFPBJ_10476. The final peptide scaffold may be released by the NAD(P)H-dependent thioester reductase (TE) at the C-terminal region of lcsA. Transamination of the lcsA product by the transaminase lcsP may produce DPD at the C-terminus. Further hydroxylation steps performed alternatively by the cytochrome P450 monooxygenases lcsI, lcsK and lcsN then yield the non-methylated leucinostatins precursor. It is also possible that leucines can be hydroxylated prior to their incorporation into the peptide. Varying extents of methylation then lead to the formation of leucinostatins A and B. This is O-methyltransferase lcsG from Purpureocillium lilacinum (Paecilomyces lilacinus).